We begin with the raw amino-acid sequence, 373 residues long: Glutamate 5-kinase (373 aa).

Position 16 (Lys-16) interacts with ATP. Ser-56, Asp-143, and Asn-155 together coordinate substrate. 175 to 176 is an ATP binding site; that stretch reads TD. The 79-residue stretch at 281-359 folds into the PUA domain; it reads RGVVTLDDGA…TKIETLLGYK (79 aa).

It belongs to the glutamate 5-kinase family.

It localises to the cytoplasm. The catalysed reaction is L-glutamate + ATP = L-glutamyl 5-phosphate + ADP. It participates in amino-acid biosynthesis; L-proline biosynthesis; L-glutamate 5-semialdehyde from L-glutamate: step 1/2. Functionally, catalyzes the transfer of a phosphate group to glutamate to form L-glutamate 5-phosphate. This chain is Glutamate 5-kinase, found in Teredinibacter turnerae (strain ATCC 39867 / T7901).